We begin with the raw amino-acid sequence, 581 residues long: Proline--tRNA ligase (581 aa).

Belongs to the class-II aminoacyl-tRNA synthetase family. ProS type 1 subfamily. Homodimer.

The protein localises to the cytoplasm. The catalysed reaction is tRNA(Pro) + L-proline + ATP = L-prolyl-tRNA(Pro) + AMP + diphosphate. Its function is as follows. Catalyzes the attachment of proline to tRNA(Pro) in a two-step reaction: proline is first activated by ATP to form Pro-AMP and then transferred to the acceptor end of tRNA(Pro). As ProRS can inadvertently accommodate and process non-cognate amino acids such as alanine and cysteine, to avoid such errors it has two additional distinct editing activities against alanine. One activity is designated as 'pretransfer' editing and involves the tRNA(Pro)-independent hydrolysis of activated Ala-AMP. The other activity is designated 'posttransfer' editing and involves deacylation of mischarged Ala-tRNA(Pro). The misacylated Cys-tRNA(Pro) is not edited by ProRS. This Leptothrix cholodnii (strain ATCC 51168 / LMG 8142 / SP-6) (Leptothrix discophora (strain SP-6)) protein is Proline--tRNA ligase.